A 622-amino-acid polypeptide reads, in one-letter code: UvrABC system protein C (622 aa).

One can recognise a GIY-YIG domain in the interval 13-92 (EKPGVYLMKN…IKKYRPKYNI (80 aa)). The UVR domain maps to 204–239 (KDILDKLKNQMEEASNSLQFEKAASLRDKIFAVKKI).

Belongs to the UvrC family. As to quaternary structure, interacts with UvrB in an incision complex.

It is found in the cytoplasm. The UvrABC repair system catalyzes the recognition and processing of DNA lesions. UvrC both incises the 5' and 3' sides of the lesion. The N-terminal half is responsible for the 3' incision and the C-terminal half is responsible for the 5' incision. This chain is UvrABC system protein C, found in Clostridium tetani (strain Massachusetts / E88).